Consider the following 175-residue polypeptide: Crossover junction endodeoxyribonuclease RuvC (175 aa).

Active-site residues include D7, E68, and D141. The Mg(2+) site is built by D7, E68, and D141.

This sequence belongs to the RuvC family. Homodimer which binds Holliday junction (HJ) DNA. The HJ becomes 2-fold symmetrical on binding to RuvC with unstacked arms; it has a different conformation from HJ DNA in complex with RuvA. In the full resolvosome a probable DNA-RuvA(4)-RuvB(12)-RuvC(2) complex forms which resolves the HJ. Mg(2+) serves as cofactor.

It localises to the cytoplasm. The catalysed reaction is Endonucleolytic cleavage at a junction such as a reciprocal single-stranded crossover between two homologous DNA duplexes (Holliday junction).. The RuvA-RuvB-RuvC complex processes Holliday junction (HJ) DNA during genetic recombination and DNA repair. Endonuclease that resolves HJ intermediates. Cleaves cruciform DNA by making single-stranded nicks across the HJ at symmetrical positions within the homologous arms, yielding a 5'-phosphate and a 3'-hydroxyl group; requires a central core of homology in the junction. The consensus cleavage sequence is 5'-(A/T)TT(C/G)-3'. Cleavage occurs on the 3'-side of the TT dinucleotide at the point of strand exchange. HJ branch migration catalyzed by RuvA-RuvB allows RuvC to scan DNA until it finds its consensus sequence, where it cleaves and resolves the cruciform DNA. This chain is Crossover junction endodeoxyribonuclease RuvC, found in Salinispora arenicola (strain CNS-205).